The primary structure comprises 90 residues: Co-chaperonin GroES (90 aa).

This sequence belongs to the GroES chaperonin family. As to quaternary structure, heptamer of 7 subunits arranged in a ring. Interacts with the chaperonin GroEL.

It localises to the cytoplasm. In terms of biological role, together with the chaperonin GroEL, plays an essential role in assisting protein folding. The GroEL-GroES system forms a nano-cage that allows encapsulation of the non-native substrate proteins and provides a physical environment optimized to promote and accelerate protein folding. GroES binds to the apical surface of the GroEL ring, thereby capping the opening of the GroEL channel. This chain is Co-chaperonin GroES, found in Phocaeicola vulgatus (strain ATCC 8482 / DSM 1447 / JCM 5826 / CCUG 4940 / NBRC 14291 / NCTC 11154) (Bacteroides vulgatus).